Consider the following 878-residue polypeptide: Probable LRR receptor-like serine/threonine-protein kinase MEE39 (878 aa).

The first 25 residues, Met-1 to Gly-25, serve as a signal peptide directing secretion. Residues Gln-26–Val-514 lie on the Extracellular side of the membrane. N-linked (GlcNAc...) asparagine glycans are attached at residues Asn-183, Asn-203, Asn-235, Asn-290, Asn-404, Asn-418, Asn-445, and Asn-466. 3 LRR repeats span residues Arg-413 to Ala-436, His-437 to Thr-458, and Ser-461 to Arg-483. The chain crosses the membrane as a helical span at residues Lys-515–Phe-535. At Lys-536–Arg-878 the chain is on the cytoplasmic side. Position 557 is a phosphothreonine (Thr-557). A Protein kinase domain is found at Lys-566–Leu-840. Residues Leu-572 to Val-580 and Lys-594 contribute to the ATP site. At Tyr-639 the chain carries Phosphotyrosine. Catalysis depends on Asp-691, which acts as the Proton acceptor. Residue Ser-726 is modified to Phosphoserine. 2 positions are modified to phosphothreonine: Thr-727 and Thr-732. Tyr-740 is subject to Phosphotyrosine. Positions Arg-849–Phe-869 are enriched in polar residues. A disordered region spans residues Arg-849–Arg-878.

This sequence belongs to the protein kinase superfamily. Ser/Thr protein kinase family.

Its subcellular location is the membrane. It catalyses the reaction L-seryl-[protein] + ATP = O-phospho-L-seryl-[protein] + ADP + H(+). It carries out the reaction L-threonyl-[protein] + ATP = O-phospho-L-threonyl-[protein] + ADP + H(+). Receptor-like serine/threonine-kinase required during the endosperm development in seeds. This is Probable LRR receptor-like serine/threonine-protein kinase MEE39 (MEE39) from Arabidopsis thaliana (Mouse-ear cress).